The chain runs to 366 residues: Peptide chain release factor 2 (366 aa).

Glutamine 253 carries the post-translational modification N5-methylglutamine.

The protein belongs to the prokaryotic/mitochondrial release factor family. Post-translationally, methylated by PrmC. Methylation increases the termination efficiency of RF2.

It localises to the cytoplasm. Its function is as follows. Peptide chain release factor 2 directs the termination of translation in response to the peptide chain termination codons UGA and UAA. The sequence is that of Peptide chain release factor 2 (prfB) from Buchnera aphidicola subsp. Baizongia pistaciae (strain Bp).